The primary structure comprises 308 residues: Vomeronasal type-1 receptor 92 (308 aa).

Over 1-18 (MNKDNTLHTIMKITMFSE) the chain is Extracellular. A helical membrane pass occupies residues 19–39 (VSVGISANSILFFAHLCMLLG). Over 40 to 48 (ENRPKPFHL) the chain is Cytoplasmic. The chain crosses the membrane as a helical span at residues 49–69 (YIVSLSLTQLILLITMGLIAV). The Extracellular segment spans residues 70 to 91 (DMFMSWGRWDSTPCQSLIYLHR). Residues C83 and C170 are joined by a disulfide bond. A helical membrane pass occupies residues 92 to 112 (LLRGFTLCAACLLNVFWMITL). The Cytoplasmic segment spans residues 113-132 (SPRSSCLSKFKHNSPHHISG). A helical transmembrane segment spans residues 133-153 (AFLFLCVLYMSFSSHLLVSII). The Extracellular portion of the chain corresponds to 154–188 (ATPNLTSNIFMYVTQSCSLLPMSYSRTSTFSTTIA). Residue N157 is glycosylated (N-linked (GlcNAc...) asparagine). Residues 189–209 (IREAFLISLMALSSGFMVTLL) form a helical membrane-spanning segment. Topologically, residues 210 to 236 (WRHKKQAQHLHSTSLSSKASPERRATR) are cytoplasmic. The chain crosses the membrane as a helical span at residues 237-257 (TILLLMSFFVVLYILENVVFY). The Extracellular portion of the chain corresponds to 258–267 (SRMKFKDGSM). The chain crosses the membrane as a helical span at residues 268–288 (FYCVQIIVSHSYATISPFVFI). Residues 289–308 (CTEKHMTKILRSVCTRIINI) lie on the Cytoplasmic side of the membrane.

The protein belongs to the G-protein coupled receptor 1 family.

It localises to the cell membrane. Its function is as follows. Putative pheromone receptor implicated in the regulation of social as well as reproductive behavior. The sequence is that of Vomeronasal type-1 receptor 92 (Vom1r92) from Rattus norvegicus (Rat).